The following is a 364-amino-acid chain: Phosphoserine aminotransferase (364 aa).

Arg46 provides a ligand contact to L-glutamate. Pyridoxal 5'-phosphate contacts are provided by residues 80–81 (AR), Trp106, Thr157, Asp176, and Gln199. Lys200 carries the N6-(pyridoxal phosphate)lysine modification. 241–242 (NT) is a binding site for pyridoxal 5'-phosphate.

The protein belongs to the class-V pyridoxal-phosphate-dependent aminotransferase family. SerC subfamily. Homodimer. Pyridoxal 5'-phosphate serves as cofactor.

Its subcellular location is the cytoplasm. It catalyses the reaction O-phospho-L-serine + 2-oxoglutarate = 3-phosphooxypyruvate + L-glutamate. The catalysed reaction is 4-(phosphooxy)-L-threonine + 2-oxoglutarate = (R)-3-hydroxy-2-oxo-4-phosphooxybutanoate + L-glutamate. Its pathway is amino-acid biosynthesis; L-serine biosynthesis; L-serine from 3-phospho-D-glycerate: step 2/3. It participates in cofactor biosynthesis; pyridoxine 5'-phosphate biosynthesis; pyridoxine 5'-phosphate from D-erythrose 4-phosphate: step 3/5. Its function is as follows. Catalyzes the reversible conversion of 3-phosphohydroxypyruvate to phosphoserine and of 3-hydroxy-2-oxo-4-phosphonooxybutanoate to phosphohydroxythreonine. The sequence is that of Phosphoserine aminotransferase from Vibrio cholerae serotype O1 (strain ATCC 39315 / El Tor Inaba N16961).